Reading from the N-terminus, the 153-residue chain is SsrA-binding protein (153 aa).

Residues 132–142 (ALKRKEAEREA) show a composition bias toward basic and acidic residues. The interval 132–153 (ALKRKEAEREAQSAMKRYAKGY) is disordered.

The protein belongs to the SmpB family.

The protein localises to the cytoplasm. In terms of biological role, required for rescue of stalled ribosomes mediated by trans-translation. Binds to transfer-messenger RNA (tmRNA), required for stable association of tmRNA with ribosomes. tmRNA and SmpB together mimic tRNA shape, replacing the anticodon stem-loop with SmpB. tmRNA is encoded by the ssrA gene; the 2 termini fold to resemble tRNA(Ala) and it encodes a 'tag peptide', a short internal open reading frame. During trans-translation Ala-aminoacylated tmRNA acts like a tRNA, entering the A-site of stalled ribosomes, displacing the stalled mRNA. The ribosome then switches to translate the ORF on the tmRNA; the nascent peptide is terminated with the 'tag peptide' encoded by the tmRNA and targeted for degradation. The ribosome is freed to recommence translation, which seems to be the essential function of trans-translation. This Campylobacter hominis (strain ATCC BAA-381 / DSM 21671 / CCUG 45161 / LMG 19568 / NCTC 13146 / CH001A) protein is SsrA-binding protein.